We begin with the raw amino-acid sequence, 66 residues long: uncharacterized protein (66 aa).

It to M.jannaschii MJ0582.

This is an uncharacterized protein from Methanocaldococcus jannaschii (strain ATCC 43067 / DSM 2661 / JAL-1 / JCM 10045 / NBRC 100440) (Methanococcus jannaschii).